Reading from the N-terminus, the 1407-residue chain is DNA-directed RNA polymerase subunit beta' (1407 aa).

Zn(2+) is bound by residues Cys70, Cys72, Cys85, and Cys88. Residues Asp460, Asp462, and Asp464 each contribute to the Mg(2+) site. 4 residues coordinate Zn(2+): Cys814, Cys888, Cys895, and Cys898.

This sequence belongs to the RNA polymerase beta' chain family. The RNAP catalytic core consists of 2 alpha, 1 beta, 1 beta' and 1 omega subunit. When a sigma factor is associated with the core the holoenzyme is formed, which can initiate transcription. It depends on Mg(2+) as a cofactor. Zn(2+) is required as a cofactor.

The enzyme catalyses RNA(n) + a ribonucleoside 5'-triphosphate = RNA(n+1) + diphosphate. In terms of biological role, DNA-dependent RNA polymerase catalyzes the transcription of DNA into RNA using the four ribonucleoside triphosphates as substrates. In Pectobacterium atrosepticum (strain SCRI 1043 / ATCC BAA-672) (Erwinia carotovora subsp. atroseptica), this protein is DNA-directed RNA polymerase subunit beta'.